Consider the following 345-residue polypeptide: DNA primase small subunit PriS (345 aa).

Residues aspartate 95 and aspartate 97 contribute to the active site. Cysteine 106, histidine 108, cysteine 114, and cysteine 117 together coordinate Zn(2+). A Zinc knuckle motif motif is present at residues 106 to 117; sequence CNHEPGKVCPIC. Aspartate 280 is an active-site residue.

The protein belongs to the eukaryotic-type primase small subunit family. In terms of assembly, heterodimer of a small subunit (PriS) and a large subunit (PriL). It depends on Mg(2+) as a cofactor. Mn(2+) serves as cofactor.

Catalytic subunit of DNA primase, an RNA polymerase that catalyzes the synthesis of short RNA molecules used as primers for DNA polymerase during DNA replication. The small subunit contains the primase catalytic core and has DNA synthesis activity on its own, synthesizing DNA strands up to 3 kB. Binding to the large subunit stabilizes and modulates the activity, increasing the rate of DNA synthesis while decreasing the length of the DNA fragments, and conferring RNA synthesis capability for RNA fragments up to 150 bases. The DNA polymerase activity may enable DNA primase to also catalyze primer extension after primer synthesis. May also play a role in DNA repair. Displays gap-filling and strand-displacement activities. This is DNA primase small subunit PriS from Pyrococcus abyssi (strain GE5 / Orsay).